A 398-amino-acid chain; its full sequence is Bifunctional enzyme IspD/IspF (398 aa).

Residues 1-234 (MTNSPRTAAI…SRLMAALGDI (234 aa)) are 2-C-methyl-D-erythritol 4-phosphate cytidylyltransferase. A 2-C-methyl-D-erythritol 2,4-cyclodiphosphate synthase region spans residues 235–398 (RTGTGYDVHA…LPWGADGLAG (164 aa)). Positions 241 and 243 each coordinate a divalent metal cation. Residues 241 to 243 (DVH) and 267 to 268 (HS) each bind 4-CDP-2-C-methyl-D-erythritol 2-phosphate. A divalent metal cation is bound at residue His-275. 4-CDP-2-C-methyl-D-erythritol 2-phosphate contacts are provided by residues 289-291 (DIG), 365-368 (TTSE), Phe-372, and Arg-375.

In the N-terminal section; belongs to the IspD/TarI cytidylyltransferase family. IspD subfamily. It in the C-terminal section; belongs to the IspF family. A divalent metal cation serves as cofactor.

The catalysed reaction is 2-C-methyl-D-erythritol 4-phosphate + CTP + H(+) = 4-CDP-2-C-methyl-D-erythritol + diphosphate. It catalyses the reaction 4-CDP-2-C-methyl-D-erythritol 2-phosphate = 2-C-methyl-D-erythritol 2,4-cyclic diphosphate + CMP. Its pathway is isoprenoid biosynthesis; isopentenyl diphosphate biosynthesis via DXP pathway; isopentenyl diphosphate from 1-deoxy-D-xylulose 5-phosphate: step 2/6. The protein operates within isoprenoid biosynthesis; isopentenyl diphosphate biosynthesis via DXP pathway; isopentenyl diphosphate from 1-deoxy-D-xylulose 5-phosphate: step 4/6. Its function is as follows. Bifunctional enzyme that catalyzes the formation of 4-diphosphocytidyl-2-C-methyl-D-erythritol from CTP and 2-C-methyl-D-erythritol 4-phosphate (MEP) (IspD), and catalyzes the conversion of 4-diphosphocytidyl-2-C-methyl-D-erythritol 2-phosphate (CDP-ME2P) to 2-C-methyl-D-erythritol 2,4-cyclodiphosphate (ME-CPP) with a corresponding release of cytidine 5-monophosphate (CMP) (IspF). The protein is Bifunctional enzyme IspD/IspF of Rhodopseudomonas palustris (strain ATCC BAA-98 / CGA009).